The sequence spans 104 residues: Ribonuclease P protein component 4 (104 aa).

Zn(2+) contacts are provided by C63, C66, C89, and C92.

This sequence belongs to the eukaryotic/archaeal RNase P protein component 4 family. Consists of a catalytic RNA component and at least 4-5 protein subunits. It depends on Zn(2+) as a cofactor.

The protein resides in the cytoplasm. The catalysed reaction is Endonucleolytic cleavage of RNA, removing 5'-extranucleotides from tRNA precursor.. In terms of biological role, part of ribonuclease P, a protein complex that generates mature tRNA molecules by cleaving their 5'-ends. The sequence is that of Ribonuclease P protein component 4 from Methanosphaera stadtmanae (strain ATCC 43021 / DSM 3091 / JCM 11832 / MCB-3).